A 101-amino-acid chain; its full sequence is MAKKSMIQRELKREKLVAKYAQKRAEFKAIILDINSTEEQIWKAQIKLQKLPVNSSASRVQRRCKVTGRPHAVYRKFGLCRNKLREYAMAGDVPGLKKASW.

It belongs to the universal ribosomal protein uS14 family. Part of the 30S ribosomal subunit. Contacts proteins S3 and S10.

In terms of biological role, binds 16S rRNA, required for the assembly of 30S particles and may also be responsible for determining the conformation of the 16S rRNA at the A site. This chain is Small ribosomal subunit protein uS14, found in Francisella tularensis subsp. holarctica (strain FTNF002-00 / FTA).